The following is a 541-amino-acid chain: Zinc finger protein 655 (541 aa).

A disordered region spans residues 1-22; it reads MEEVTSQEAAESPRGHFQPLEN. C2H2-type zinc fingers lie at residues 243–265, 271–293, 334–356, 361–383, 411–433, and 439–461; these read YKCD…QRIH, YKCK…KRIH, YKCG…QRTH, CKCT…QRLH, YSCN…QRIH, and HECN…HKMH. The segment at 495–517 adopts a C2H2-type 7; degenerate zinc-finger fold; the sequence is FDCDAWEENFSQRAHLIQHERVH.

The protein belongs to the krueppel C2H2-type zinc-finger protein family. In terms of assembly, interacts with VAV1 and CDK4. Interacts with INTS13; promoting association with the integrator complex.

The protein localises to the nucleus. Functionally, probable transcription factor. This Mus musculus (Mouse) protein is Zinc finger protein 655 (Znf655).